Reading from the N-terminus, the 265-residue chain is Neuronal membrane glycoprotein M6-b (265 aa).

The chain crosses the membrane as a helical span at residues 31-51; sequence GGVPYASLVATILCFSGVALF. An N-linked (GlcNAc...) asparagine glycan is attached at asparagine 73. Transmembrane regions (helical) follow at residues 90–110 and 136–156; these read VIYGIASFFFLYGIILLAEGF and FVFLTYVLGVAWLGVFGFSAV. Asparagine 177 carries an N-linked (GlcNAc...) asparagine glycan. Residues 224–244 form a helical membrane-spanning segment; that stretch reads LFIVACAGAGATVIALLIYMM. A Phosphoserine modification is found at serine 257.

This sequence belongs to the myelin proteolipid protein family. In terms of assembly, interacts with SERT. As to expression, highly expressed in the ventral medullary surface, moderately in the cerebral cortex and cerebellum, poorly in lung and kidney, and not at all in heart, skeletal muscle, liver, stomach or stomach.

The protein resides in the membrane. The protein localises to the cell membrane. Its function is as follows. May be involved in neural development. Involved in regulation of osteoblast function and bone formation. Involved in matrix vesicle release by osteoblasts; this function seems to involve maintenance of the actin cytoskeleton. May be involved in cellular trafficking of SERT and thereby in regulation of serotonin uptake. The polypeptide is Neuronal membrane glycoprotein M6-b (Gpm6b) (Rattus norvegicus (Rat)).